Here is a 76-residue protein sequence, read N- to C-terminus: Exodeoxyribonuclease 7 small subunit (76 aa).

This sequence belongs to the XseB family. Heterooligomer composed of large and small subunits.

It is found in the cytoplasm. It catalyses the reaction Exonucleolytic cleavage in either 5'- to 3'- or 3'- to 5'-direction to yield nucleoside 5'-phosphates.. Its function is as follows. Bidirectionally degrades single-stranded DNA into large acid-insoluble oligonucleotides, which are then degraded further into small acid-soluble oligonucleotides. The chain is Exodeoxyribonuclease 7 small subunit from Bacillus cytotoxicus (strain DSM 22905 / CIP 110041 / 391-98 / NVH 391-98).